The primary structure comprises 472 residues: ATP synthase subunit beta (472 aa).

156 to 163 contacts ATP; that stretch reads GGAGVGKT.

Belongs to the ATPase alpha/beta chains family. As to quaternary structure, F-type ATPases have 2 components, CF(1) - the catalytic core - and CF(0) - the membrane proton channel. CF(1) has five subunits: alpha(3), beta(3), gamma(1), delta(1), epsilon(1). CF(0) has three main subunits: a(1), b(2) and c(9-12). The alpha and beta chains form an alternating ring which encloses part of the gamma chain. CF(1) is attached to CF(0) by a central stalk formed by the gamma and epsilon chains, while a peripheral stalk is formed by the delta and b chains.

It is found in the cell membrane. It carries out the reaction ATP + H2O + 4 H(+)(in) = ADP + phosphate + 5 H(+)(out). Its function is as follows. Produces ATP from ADP in the presence of a proton gradient across the membrane. The catalytic sites are hosted primarily by the beta subunits. In Symbiobacterium thermophilum (strain DSM 24528 / JCM 14929 / IAM 14863 / T), this protein is ATP synthase subunit beta.